The following is an 825-amino-acid chain: AMP deaminase 2 (825 aa).

The disordered stretch occupies residues 1 to 49 (MASYPSGSGKPKAKYPFKKRASLQASTAAPEARGGLGAPPLQSARSLPG). The span at 11–21 (PKAKYPFKKRA) shows a compositional bias: basic residues. Ser-22 carries the post-translational modification Phosphoserine. At Arg-45 the chain carries Omega-N-methylarginine. Phosphoserine occurs at positions 46, 64, and 80. Residue Tyr-91 is modified to Phosphotyrosine. Ser-97 and Ser-114 each carry phosphoserine. Phosphothreonine is present on Thr-134. Phosphoserine is present on residues Ser-136 and Ser-138. Zn(2+) is bound by residues His-364 and His-366. Residues His-366 and 435 to 440 (KFNAKY) each bind substrate. Position 633 (His-633) interacts with Zn(2+). Glu-636 is a binding site for substrate. The active-site Proton acceptor is the His-655. Residue Asp-710 participates in Zn(2+) binding. A substrate-binding site is contributed by 711–714 (DPLQ).

This sequence belongs to the metallo-dependent hydrolases superfamily. Adenosine and AMP deaminases family. In terms of assembly, homotetramer. It depends on Zn(2+) as a cofactor. Highly expressed in cerebellum.

The catalysed reaction is AMP + H2O + H(+) = IMP + NH4(+). Its pathway is purine metabolism; IMP biosynthesis via salvage pathway; IMP from AMP: step 1/1. AMP deaminase plays a critical role in energy metabolism. Catalyzes the deamination of AMP to IMP and plays an important role in the purine nucleotide cycle. The chain is AMP deaminase 2 from Homo sapiens (Human).